Consider the following 633-residue polypeptide: Terminal nucleotidyltransferase 4B (633 aa).

The disordered stretch occupies residues 1–115 (MFRSGERPLG…GGGRADGGGG (115 aa)). The segment covering 25–34 (ETTNNNNNHH) has biased composition (polar residues). Low complexity-rich tracts occupy residues 36-52 (PAAWARRASAGPSASPV) and 60-70 (RPAAALPASES). Over residues 87 to 98 (ASTYGLNYSLLQ) the composition is skewed to polar residues. Residues 103 to 115 (RAAGGGRADGGGG) show a composition bias toward gly residues. Residues aspartate 191 and aspartate 193 each coordinate Mg(2+). Positions 254, 279, 297, 298, 382, and 386 each coordinate ATP. Positions 322 to 382 (NYGVLLIEFF…YIEDPLQPGN (61 aa)) constitute a PAP-associated domain. The tract at residues 484–633 (LGKCRSNASE…RDAPLSELCR (150 aa)) is disordered. Positions 492–519 (SEPLSKHSSNSSSGPVSSSSATQSSSSD) are enriched in low complexity. Lysine 531 participates in a covalent cross-link: Glycyl lysine isopeptide (Lys-Gly) (interchain with G-Cter in SUMO2). Over residues 542–552 (RVGSQDVSLEV) the composition is skewed to polar residues. Serine 545 bears the Phosphoserine mark. Residues lysine 558, lysine 573, and lysine 587 each participate in a glycyl lysine isopeptide (Lys-Gly) (interchain with G-Cter in SUMO2) cross-link. A compositionally biased stretch (polar residues) spans 559–614 (MQSTQTTNTPNNANKSQHGSARLFRSSSKGFQGTAQTSHGALMTSKQHQGKSNTQY). A Basic, involved in binding of the RNA primer motif is present at residues 618-624 (KKRRHKR).

Belongs to the DNA polymerase type-B-like family. In terms of assembly, component of a nucleolar TRAMP-like complex, an ATP-dependent exosome regulatory complex consisting of a helicase (MTREX), an oligadenylate polymerase (TENT4B or TENT4A), and a substrate specific RNA-binding factor (ZCCHC7 or ZCCHC8). Several TRAMP-like complexes exist with specific compositions and are associated with nuclear, or nucleolar RNA exosomes. Mg(2+) serves as cofactor. The cofactor is Mn(2+).

Its subcellular location is the nucleus. The protein resides in the nucleolus. It localises to the cytoplasm. It catalyses the reaction RNA(n) + ATP = RNA(n)-3'-adenine ribonucleotide + diphosphate. Its function is as follows. Terminal nucleotidyltransferase that catalyzes preferentially the transfer of ATP and GTP on RNA 3' poly(A) tail creating a heterogeneous 3' poly(A) tail leading to mRNAs stabilization by protecting mRNAs from active deadenylation. Also functions as a catalytic subunit of a TRAMP-like complex which has a poly(A) RNA polymerase activity and is involved in a post-transcriptional quality control mechanism. Polyadenylation with short oligo(A) tails is required for the degradative activity of the exosome on several of its nuclear RNA substrates. Doesn't need a cofactor for polyadenylation activity (in vitro). Plays a role in replication-dependent histone mRNA degradation, probably through terminal uridylation of mature histone mRNAs. May play a role in sister chromatid cohesion. This chain is Terminal nucleotidyltransferase 4B, found in Mus musculus (Mouse).